Here is a 395-residue protein sequence, read N- to C-terminus: ETS-related transcription factor Elf-3 (395 aa).

The 87-residue stretch at 69 to 155 (EPPAVLHLAE…AQLRDLTSSS (87 aa)) folds into the PNT domain. A compositionally biased stretch (low complexity) spans 200 to 240 (ASPYYGSSYGPGAPSPGSSDFSTSGTDTPQSSHSSDSGGSD). The disordered stretch occupies residues 200–275 (ASPYYGSSYG…HGKRKRGRPR (76 aa)). Residues 246–265 (TDSKVFPRDGFPDYKKGEPK) show a composition bias toward basic and acidic residues. Residues 266-275 (HGKRKRGRPR) are compositionally biased toward basic residues. The ETS DNA-binding region spans 297-379 (THLWEFIRDI…DGRRLVYKFG (83 aa)).

Belongs to the ETS family. In terms of assembly, interacts with TBP. Interacts with CREBBP and EP300; these act as transcriptional coactivators of ELF3 and positively modulate its function. Interacts with XRCC5/KU86 and XRCC6/KU70; these inhibit the ability of ELF3 to bind DNA and negatively modulate its transcriptional activity. Associated with CLND7 and POU2F3. Interacts with ZNF768.

It localises to the cytoplasm. The protein localises to the nucleus. Functionally, transcriptional activator that binds and transactivates ETS sequences containing the consensus nucleotide core sequence GGA[AT]. Acts synergistically with POU2F3 to transactivate the SPRR2A promoter and with RUNX1 to transactivate the ANGPT1 promoter. Also transactivates collagenase, CCL20, CLND7, FLG, KRT8, NOS2, PTGS2, SPRR2B, TGFBR2 and TGM3 promoters. Represses KRT4 promoter activity. Involved in mediating vascular inflammation. May play an important role in epithelial cell differentiation and tumorigenesis. May be a critical downstream effector of the ERBB2 signaling pathway. May be associated with mammary gland development and involution. Plays an important role in the regulation of transcription with TATA-less promoters in preimplantation embryos, which is essential in preimplantation development. This is ETS-related transcription factor Elf-3 from Rattus norvegicus (Rat).